The sequence spans 436 residues: 3-ketoacyl-CoA thiolase (436 aa).

C99 acts as the Acyl-thioester intermediate in catalysis. Catalysis depends on proton acceptor residues H392 and C422.

It belongs to the thiolase-like superfamily. Thiolase family. Heterotetramer of two alpha chains (FadJ) and two beta chains (FadI).

It is found in the cytoplasm. It carries out the reaction an acyl-CoA + acetyl-CoA = a 3-oxoacyl-CoA + CoA. Its pathway is lipid metabolism; fatty acid beta-oxidation. Its function is as follows. Catalyzes the final step of fatty acid oxidation in which acetyl-CoA is released and the CoA ester of a fatty acid two carbons shorter is formed. The polypeptide is 3-ketoacyl-CoA thiolase (Escherichia fergusonii (strain ATCC 35469 / DSM 13698 / CCUG 18766 / IAM 14443 / JCM 21226 / LMG 7866 / NBRC 102419 / NCTC 12128 / CDC 0568-73)).